Here is a 67-residue protein sequence, read N- to C-terminus: Large ribosomal subunit protein bL35 (67 aa).

The segment at 21–50 is disordered; the sequence is KVMCGPGNKRHGLINRPQKMKRTNRGPQTM. Residues 28–44 are compositionally biased toward basic residues; that stretch reads NKRHGLINRPQKMKRTN.

Belongs to the bacterial ribosomal protein bL35 family.

The chain is Large ribosomal subunit protein bL35 from Gluconobacter oxydans (strain 621H) (Gluconobacter suboxydans).